We begin with the raw amino-acid sequence, 432 residues long: Gamma-glutamyl phosphate reductase (432 aa).

The protein belongs to the gamma-glutamyl phosphate reductase family.

The protein resides in the cytoplasm. It catalyses the reaction L-glutamate 5-semialdehyde + phosphate + NADP(+) = L-glutamyl 5-phosphate + NADPH + H(+). The protein operates within amino-acid biosynthesis; L-proline biosynthesis; L-glutamate 5-semialdehyde from L-glutamate: step 2/2. Its function is as follows. Catalyzes the NADPH-dependent reduction of L-glutamate 5-phosphate into L-glutamate 5-semialdehyde and phosphate. The product spontaneously undergoes cyclization to form 1-pyrroline-5-carboxylate. The sequence is that of Gamma-glutamyl phosphate reductase from Deinococcus radiodurans (strain ATCC 13939 / DSM 20539 / JCM 16871 / CCUG 27074 / LMG 4051 / NBRC 15346 / NCIMB 9279 / VKM B-1422 / R1).